The following is a 275-amino-acid chain: Adenosylcobinamide-GDP ribazoletransferase (275 aa).

The next 6 membrane-spanning stretches (helical) occupy residues 53–73 (WFVF…TISL), 113–133 (VGSF…LGVS), 144–164 (LPFT…LYFV), 204–224 (FACI…PYFL), 225–245 (LSLL…KRWI), and 253–273 (LGAV…FVWI).

The protein belongs to the CobS family. Mg(2+) is required as a cofactor.

It localises to the cell inner membrane. The enzyme catalyses alpha-ribazole + adenosylcob(III)inamide-GDP = adenosylcob(III)alamin + GMP + H(+). The catalysed reaction is alpha-ribazole 5'-phosphate + adenosylcob(III)inamide-GDP = adenosylcob(III)alamin 5'-phosphate + GMP + H(+). It participates in cofactor biosynthesis; adenosylcobalamin biosynthesis; adenosylcobalamin from cob(II)yrinate a,c-diamide: step 7/7. In terms of biological role, joins adenosylcobinamide-GDP and alpha-ribazole to generate adenosylcobalamin (Ado-cobalamin). Also synthesizes adenosylcobalamin 5'-phosphate from adenosylcobinamide-GDP and alpha-ribazole 5'-phosphate. The sequence is that of Adenosylcobinamide-GDP ribazoletransferase from Leptospira biflexa serovar Patoc (strain Patoc 1 / Ames).